We begin with the raw amino-acid sequence, 124 residues long: V-type proton ATPase subunit F 1 (124 aa).

S87 bears the Phosphoserine mark.

This sequence belongs to the V-ATPase F subunit family. V-ATPase is a heteromultimeric enzyme made up of two complexes: the ATP-hydrolytic V1 complex and the proton translocation V0 complex. The V1 complex consists of three catalytic AB heterodimers that form a heterohexamer, three peripheral stalks each consisting of EG heterodimers, one central rotor including subunits D and F, and the regulatory subunits C and H. The proton translocation complex V0 consists of the proton transport subunit a, a ring of proteolipid subunits c9c'', rotary subunit d, subunits e and f, and the accessory subunits VhaAC45 and ATP6AP2.

In terms of biological role, subunit of the V1 complex of vacuolar(H+)-ATPase (V-ATPase), a multisubunit enzyme composed of a peripheral complex (V1) that hydrolyzes ATP and a membrane integral complex (V0) that translocates protons. V-ATPase is responsible for acidifying and maintaining the pH of intracellular compartments and in some cell types, is targeted to the plasma membrane, where it is responsible for acidifying the extracellular environment. In Drosophila melanogaster (Fruit fly), this protein is V-type proton ATPase subunit F 1 (Vha14-1).